We begin with the raw amino-acid sequence, 393 residues long: Upstream-binding factor 1-like protein 1 (393 aa).

DNA-binding regions (HMG box) lie at residues proline 100–arginine 168 and glutamine 222–leucine 288. A disordered region spans residues lysine 308 to valine 393. Residues glutamate 365–serine 377 are compositionally biased toward basic and acidic residues.

It is found in the cytoplasm. The protein resides in the nucleus. Functionally, essential for proliferation of the inner cell mass and trophectodermal cells in peri-implantation development. The chain is Upstream-binding factor 1-like protein 1 from Homo sapiens (Human).